We begin with the raw amino-acid sequence, 874 residues long: Alanine--tRNA ligase (874 aa).

Residues His-562, His-566, Cys-663, and His-667 each contribute to the Zn(2+) site.

This sequence belongs to the class-II aminoacyl-tRNA synthetase family. The cofactor is Zn(2+).

Its subcellular location is the cytoplasm. It catalyses the reaction tRNA(Ala) + L-alanine + ATP = L-alanyl-tRNA(Ala) + AMP + diphosphate. Catalyzes the attachment of alanine to tRNA(Ala) in a two-step reaction: alanine is first activated by ATP to form Ala-AMP and then transferred to the acceptor end of tRNA(Ala). Also edits incorrectly charged Ser-tRNA(Ala) and Gly-tRNA(Ala) via its editing domain. This is Alanine--tRNA ligase from Bordetella parapertussis (strain 12822 / ATCC BAA-587 / NCTC 13253).